Consider the following 217-residue polypeptide: N-(5'-phosphoribosyl)anthranilate isomerase (217 aa).

The protein belongs to the TrpF family.

The enzyme catalyses N-(5-phospho-beta-D-ribosyl)anthranilate = 1-(2-carboxyphenylamino)-1-deoxy-D-ribulose 5-phosphate. The protein operates within amino-acid biosynthesis; L-tryptophan biosynthesis; L-tryptophan from chorismate: step 3/5. The polypeptide is N-(5'-phosphoribosyl)anthranilate isomerase (Chlorobium phaeobacteroides (strain BS1)).